Reading from the N-terminus, the 153-residue chain is Cytochrome c-type biogenesis protein CcmE (153 aa).

Over 1 to 7 (MKPRHKR) the chain is Cytoplasmic. Residues 8–28 (LAIAGGVLVAVGAIATLVLNA) traverse the membrane as a helical; Signal-anchor for type II membrane protein segment. The Periplasmic segment spans residues 29-153 (FQSNLVFFYS…SSQAATGDPR (125 aa)). Heme-binding residues include His120 and Tyr124. The tract at residues 130–153 (AEALKRAKEGGQMQSSQAATGDPR) is disordered. Residues 141 to 153 (QMQSSQAATGDPR) show a composition bias toward polar residues.

It belongs to the CcmE/CycJ family.

Its subcellular location is the cell inner membrane. In terms of biological role, heme chaperone required for the biogenesis of c-type cytochromes. Transiently binds heme delivered by CcmC and transfers the heme to apo-cytochromes in a process facilitated by CcmF and CcmH. This is Cytochrome c-type biogenesis protein CcmE from Leptothrix cholodnii (strain ATCC 51168 / LMG 8142 / SP-6) (Leptothrix discophora (strain SP-6)).